A 96-amino-acid polypeptide reads, in one-letter code: Aspartyl/glutamyl-tRNA(Asn/Gln) amidotransferase subunit C (96 aa).

It belongs to the GatC family. As to quaternary structure, heterotrimer of A, B and C subunits.

The enzyme catalyses L-glutamyl-tRNA(Gln) + L-glutamine + ATP + H2O = L-glutaminyl-tRNA(Gln) + L-glutamate + ADP + phosphate + H(+). It catalyses the reaction L-aspartyl-tRNA(Asn) + L-glutamine + ATP + H2O = L-asparaginyl-tRNA(Asn) + L-glutamate + ADP + phosphate + 2 H(+). Allows the formation of correctly charged Asn-tRNA(Asn) or Gln-tRNA(Gln) through the transamidation of misacylated Asp-tRNA(Asn) or Glu-tRNA(Gln) in organisms which lack either or both of asparaginyl-tRNA or glutaminyl-tRNA synthetases. The reaction takes place in the presence of glutamine and ATP through an activated phospho-Asp-tRNA(Asn) or phospho-Glu-tRNA(Gln). In Fusobacterium nucleatum subsp. nucleatum (strain ATCC 25586 / DSM 15643 / BCRC 10681 / CIP 101130 / JCM 8532 / KCTC 2640 / LMG 13131 / VPI 4355), this protein is Aspartyl/glutamyl-tRNA(Asn/Gln) amidotransferase subunit C.